The chain runs to 309 residues: MDISFLVFITLSMALFSSNVTGTSVTSRVRRGINEKHCGFRPVITRIIGGGIATPHSWPWMVGIFKVNPHRFLCGGSIINKVSVVTAAHCLVTQFGNRQNYSIFVRVGAHDIDNSGTNYQVDKVIVHQGYKHHSHYYDIGLILLSKPVEYNDKIQPVCIPEFNKPHVNLNNIKVVITGWGVTGKATEKRNVLRELELPVVTNEQCNKSYQTLPFSKLNRGITNDMICAGFPEGGKDACQGDSGGPLMYQNPTTGRVKIVGVVSFGFECARPNFPGVYTRLSSYVNWLQEITFGQSLASLFEVVPIFIPE.

A signal peptide spans 1 to 31; it reads MDISFLVFITLSMALFSSNVTGTSVTSRVRR. Disulfide bonds link cysteine 38/cysteine 158, cysteine 74/cysteine 90, cysteine 205/cysteine 227, and cysteine 238/cysteine 268. One can recognise a Peptidase S1 domain in the interval 47–292; it reads IIGGGIATPH…YVNWLQEITF (246 aa). Catalysis depends on histidine 89, which acts as the Charge relay system. An N-linked (GlcNAc...) asparagine glycan is attached at asparagine 100. Catalysis depends on aspartate 138, which acts as the Charge relay system. Asparagine 206 carries N-linked (GlcNAc...) asparagine glycosylation. Serine 242 functions as the Charge relay system in the catalytic mechanism.

This sequence belongs to the peptidase S1 family. As to quaternary structure, clotting factor G is a heterodimer composed of two non-covalently associated subunits, alpha and beta. Upon activation, converted to a two-chain active form linked by a disulfide bond. Forms a covalent heterodimer with intracellular coagulation inhibitor 3/LICI-3. Expressed in the hemocytes (at protein level).

It carries out the reaction Selective cleavage of 98-Arg-|-Ile-99 bond in Limulus proclotting enzyme to form active clotting enzyme.. With respect to regulation, binding to (1-&gt;3)-beta-D-glucan to alpha subunit, induces autocatalysis and activation of beta subunit. Inhibited by intracellular coagulation inhibitor 3/LICI-3 and to a lesser extend by intracellular coagulation inhibitor 2/LICI-2. Component of the heterodimer clotting factor G which may play a role in defense mechanisms against fungi. Initiates a (1-&gt;3)-beta-glucan-sensing clotting pathway whereby the alpha subunit binds to glucans containing (1-&gt;3)-beta linkages, which are components of the fungal cell wall, and the beta subunit catalyzes the activation of proclotting enzyme. The sequence is that of Clotting factor G beta subunit from Tachypleus tridentatus (Japanese horseshoe crab).